A 150-amino-acid chain; its full sequence is Deoxyuridine 5'-triphosphate nucleotidohydrolase (150 aa).

Residues 69–71 (RSG), N82, and 86–88 (LID) each bind substrate.

The protein belongs to the dUTPase family. It depends on Mg(2+) as a cofactor.

The catalysed reaction is dUTP + H2O = dUMP + diphosphate + H(+). It functions in the pathway pyrimidine metabolism; dUMP biosynthesis; dUMP from dCTP (dUTP route): step 2/2. Functionally, this enzyme is involved in nucleotide metabolism: it produces dUMP, the immediate precursor of thymidine nucleotides and it decreases the intracellular concentration of dUTP so that uracil cannot be incorporated into DNA. This is Deoxyuridine 5'-triphosphate nucleotidohydrolase from Chromobacterium violaceum (strain ATCC 12472 / DSM 30191 / JCM 1249 / CCUG 213 / NBRC 12614 / NCIMB 9131 / NCTC 9757 / MK).